Consider the following 354-residue polypeptide: Tyrosine recombinase XerH (354 aa).

A Core-binding (CB) domain is found at 48–134 (LTKGVKNIDE…AVINFFDFLD (87 aa)). Residues 163–346 (KLPEFMSKEE…DNDKLKLAAQ (184 aa)) enclose the Tyr recombinase domain. Catalysis depends on residues R205, K231, H298, R301, and H324. Y333 serves as the catalytic O-(3'-phospho-DNA)-tyrosine intermediate.

Belongs to the 'phage' integrase family. XerH subfamily.

Its subcellular location is the cytoplasm. Its activity is regulated as follows. FtsK is required for efficient recombination. In terms of biological role, site-specific tyrosine recombinase, which acts by catalyzing the cutting and rejoining of the recombining DNA molecules. Binds to the complete atypical dif motif (difH) site and to both halves separately. The chain is Tyrosine recombinase XerH from Campylobacter jejuni subsp. jejuni serotype O:2 (strain ATCC 700819 / NCTC 11168).